Reading from the N-terminus, the 288-residue chain is Diaminopimelate epimerase (288 aa).

Asn14 and Asn67 together coordinate substrate. The active-site Proton donor is Cys76. Substrate is bound by residues Gly77–Asn78, Asn166, Asn199, and Glu217–Arg218. The active-site Proton acceptor is Cys226. Gly227–Thr228 lines the substrate pocket.

The protein belongs to the diaminopimelate epimerase family. In terms of assembly, homodimer.

The protein resides in the cytoplasm. It catalyses the reaction (2S,6S)-2,6-diaminopimelate = meso-2,6-diaminopimelate. It functions in the pathway amino-acid biosynthesis; L-lysine biosynthesis via DAP pathway; DL-2,6-diaminopimelate from LL-2,6-diaminopimelate: step 1/1. Functionally, catalyzes the stereoinversion of LL-2,6-diaminopimelate (L,L-DAP) to meso-diaminopimelate (meso-DAP), a precursor of L-lysine and an essential component of the bacterial peptidoglycan. The protein is Diaminopimelate epimerase of Bacillus cereus (strain 03BB102).